A 56-amino-acid polypeptide reads, in one-letter code: Bdellin B-3 (56 aa).

Positions 1-42 constitute a Kazal-like domain; that stretch reads DTECVCTKELHRVCGSDGVTYDNECLATCHGASVAHDHACEG. Cystine bridges form between C4/C29, C6/C25, and C14/C40.

Its function is as follows. Proteinase inhibitor. Blocks the activity of trypsin, plasmin and sperm acrosin. This is Bdellin B-3 from Hirudo medicinalis (Medicinal leech).